Reading from the N-terminus, the 361-residue chain is Chorismate synthase (361 aa).

Residues Arg48 and Arg54 each contribute to the NADP(+) site. Residues 125–127 (RSS), 238–239 (NA), Gly278, 293–297 (KPTSS), and Arg319 each bind FMN.

The protein belongs to the chorismate synthase family. As to quaternary structure, homotetramer. FMNH2 is required as a cofactor.

The catalysed reaction is 5-O-(1-carboxyvinyl)-3-phosphoshikimate = chorismate + phosphate. It participates in metabolic intermediate biosynthesis; chorismate biosynthesis; chorismate from D-erythrose 4-phosphate and phosphoenolpyruvate: step 7/7. In terms of biological role, catalyzes the anti-1,4-elimination of the C-3 phosphate and the C-6 proR hydrogen from 5-enolpyruvylshikimate-3-phosphate (EPSP) to yield chorismate, which is the branch point compound that serves as the starting substrate for the three terminal pathways of aromatic amino acid biosynthesis. This reaction introduces a second double bond into the aromatic ring system. This is Chorismate synthase from Salmonella choleraesuis (strain SC-B67).